The sequence spans 513 residues: GMP synthase [glutamine-hydrolyzing] (513 aa).

Positions 3–200 constitute a Glutamine amidotransferase type-1 domain; that stretch reads SVTVLDFGSQ…LIDIAGIKPD (198 aa). The active-site Nucleophile is the Cys-80. Residues His-174 and Glu-176 contribute to the active site. In terms of domain architecture, GMPS ATP-PPase spans 201 to 388; sequence WSPKSFIGHQ…LGIAEDILMR (188 aa). An ATP-binding site is contributed by 228–234; the sequence is SGGVDST.

In terms of assembly, homodimer.

The enzyme catalyses XMP + L-glutamine + ATP + H2O = GMP + L-glutamate + AMP + diphosphate + 2 H(+). Its pathway is purine metabolism; GMP biosynthesis; GMP from XMP (L-Gln route): step 1/1. Functionally, catalyzes the synthesis of GMP from XMP. The protein is GMP synthase [glutamine-hydrolyzing] of Chlorobium phaeobacteroides (strain DSM 266 / SMG 266 / 2430).